Here is a 334-residue protein sequence, read N- to C-terminus: Anthranilate phosphoribosyltransferase (334 aa).

Residues G81, 84-85, T89, 91-94, 109-117, and A121 each bind 5-phospho-alpha-D-ribose 1-diphosphate; these read GD, NIST, and KHGNRSVSS. G81 contributes to the anthranilate binding site. Residue S93 coordinates Mg(2+). N112 lines the anthranilate pocket. Residue R167 participates in anthranilate binding. Mg(2+)-binding residues include D225 and E226.

It belongs to the anthranilate phosphoribosyltransferase family. As to quaternary structure, homodimer. Mg(2+) serves as cofactor.

The enzyme catalyses N-(5-phospho-beta-D-ribosyl)anthranilate + diphosphate = 5-phospho-alpha-D-ribose 1-diphosphate + anthranilate. It participates in amino-acid biosynthesis; L-tryptophan biosynthesis; L-tryptophan from chorismate: step 2/5. Functionally, catalyzes the transfer of the phosphoribosyl group of 5-phosphorylribose-1-pyrophosphate (PRPP) to anthranilate to yield N-(5'-phosphoribosyl)-anthranilate (PRA). This chain is Anthranilate phosphoribosyltransferase, found in Histophilus somni (strain 2336) (Haemophilus somnus).